Reading from the N-terminus, the 227-residue chain is Cell wall mannoprotein CIS3 (227 aa).

A signal peptide spans 1 to 21; it reads MQFKNVALAASVAALSATASA. A propeptide spanning residues 22–64 is cleaved from the precursor; sequence EGYTPGEPWSTLTPTGSISCGAAEYTTTFGIAVQAITSSKAKR. The PIR1/2/3 repeat unit spans residues 65–78; it reads DVISQIGDGQVQAT. Ser68 is a glycosylation site (O-linked (Man) serine). Thr78 carries an O-linked (Man) threonine glycan. The segment covering 83–124 has biased composition (low complexity); sequence AQATDSQAQATTTATPTSSEKISSSASKTSTNATSSSCATPS. Residues 83 to 127 are disordered; sequence AQATDSQAQATTTATPTSSEKISSSASKTSTNATSSSCATPSLKD. O-linked (Man) serine glycosylation is found at Ser105, Ser106, Ser107, and Ser109. O-linked (Man) threonine glycosylation is present at Thr111. Ser112 carries O-linked (Man) serine glycosylation. Thr113 carries an O-linked (Man) threonine glycan. A glycan (N-linked (GlcNAc...) asparagine) is linked at Asn114. An O-linked (Man) threonine glycan is attached at Thr116. Ser117 and Ser118 each carry an O-linked (Man) serine glycan.

It belongs to the PIR protein family. Covalently linked to beta-1,3-glucan of the inner cell wall layer via an alkali-sensitive ester linkage between the gamma-carboxyl group of glutamic acid, arising from Gln-74 within the PIR1/2/3 repeat, and hydroxyl groups of glucoses of beta-1,3-glucan chains. In terms of processing, extensively O-mannosylated. Also N-glycosylated.

Its subcellular location is the secreted. The protein localises to the cell wall. Its function is as follows. Component of the outer cell wall layer. Required for stability of the cell wall and for optimal growth. Required for resistance against several antifungal and cell wall-perturbing agents. The chain is Cell wall mannoprotein CIS3 (CIS3) from Saccharomyces cerevisiae (strain ATCC 204508 / S288c) (Baker's yeast).